A 192-amino-acid polypeptide reads, in one-letter code: Dynein axonemal light chain 1 (192 aa).

LRR repeat units lie at residues 49–70 (NCER…NGLK), 71–92 (NLKI…EAVG), 94–115 (TLEE…HVMK), and 116–137 (KLKV…LKLA). Positions 150 to 192 (NPLEEKYSADGNWIEEATKRLPKLKKLDGNPVIKQEEETEGES) constitute an LRRCT domain.

The protein belongs to the dynein light chain LC1-type family. In terms of assembly, interacts with DNAH5, a outer arm dynein heavy chain. Interacts with tubulin located within the A-tubule of the outer doublets in a ATP-independent manner.

Its subcellular location is the cytoplasm. It localises to the cytoskeleton. The protein localises to the cilium axoneme. Its function is as follows. Part of the multisubunit axonemal ATPase complexes that generate the force for cilia motility and govern beat frequency. Component of the outer arm dynein (ODA). May be involved in a mechanosensory feedback mechanism controlling ODA activity based on external conformational cues by tethering the outer arm dynein heavy chain (DNAH5) to the microtubule within the axoneme. This is Dynein axonemal light chain 1 (dnal1) from Danio rerio (Zebrafish).